Reading from the N-terminus, the 251-residue chain is DNA repair protein RecO (251 aa).

The protein belongs to the RecO family.

Its function is as follows. Involved in DNA repair and RecF pathway recombination. The polypeptide is DNA repair protein RecO (Lactococcus lactis subsp. cremoris (strain SK11)).